The sequence spans 171 residues: Adenine phosphoribosyltransferase (171 aa).

This sequence belongs to the purine/pyrimidine phosphoribosyltransferase family. Homodimer.

Its subcellular location is the cytoplasm. The enzyme catalyses AMP + diphosphate = 5-phospho-alpha-D-ribose 1-diphosphate + adenine. It functions in the pathway purine metabolism; AMP biosynthesis via salvage pathway; AMP from adenine: step 1/1. Catalyzes a salvage reaction resulting in the formation of AMP, that is energically less costly than de novo synthesis. The chain is Adenine phosphoribosyltransferase from Gloeobacter violaceus (strain ATCC 29082 / PCC 7421).